A 311-amino-acid polypeptide reads, in one-letter code: Urease accessory protein UreD (311 aa).

Belongs to the UreD family. As to quaternary structure, ureD, UreF and UreG form a complex that acts as a GTP-hydrolysis-dependent molecular chaperone, activating the urease apoprotein by helping to assemble the nickel containing metallocenter of UreC. The UreE protein probably delivers the nickel.

The protein localises to the cytoplasm. Required for maturation of urease via the functional incorporation of the urease nickel metallocenter. This chain is Urease accessory protein UreD, found in Parasynechococcus marenigrum (strain WH8102).